Consider the following 422-residue polypeptide: Probable FBD-associated F-box protein At1g32375 (422 aa).

The 53-residue stretch at 1–53 folds into the F-box domain; it reads MDKLSQLPEALLVRILSLLSAKDVVSTMVLSKRWQFLWMLVPKLIYDDSYQAI. Positions 342-392 constitute an FBD domain; sequence CWNEPSAVPECLLTSLETLEWVKYEGTEEEKEVAAFILRSGSCLKKVTISS.

This chain is Probable FBD-associated F-box protein At1g32375, found in Arabidopsis thaliana (Mouse-ear cress).